Reading from the N-terminus, the 417-residue chain is Phosphoglycerate kinase 1 (417 aa).

Ser-2 bears the N-acetylserine mark. Phosphoserine is present on residues Ser-2 and Ser-4. Lys-6 carries the N6-succinyllysine modification. Lys-11 carries the N6-acetyllysine modification. Positions 23, 24, 25, 26, 38, and 39 each coordinate (2R)-3-phosphoglycerate. The interval Gln-38–Ala-43 is mitochondrial targeting region exposed following cis-trans isomerization by PIN1 and recognized by the TOM complex for mitochondrial translocation of the protein. N6-acetyllysine; alternate is present on Lys-48. An N6-succinyllysine; alternate modification is found at Lys-48. 4 residues coordinate (2R)-3-phosphoglycerate: Ser-62, His-63, Gly-65, and Arg-66. Lys-75 carries the N6-acetyllysine modification. Position 76 is a phosphotyrosine (Tyr-76). 2 positions are modified to N6-acetyllysine: Lys-86 and Lys-91. The residue at position 97 (Lys-97) is an N6-acetyllysine; alternate. Lys-97 bears the N6-(2-hydroxyisobutyryl)lysine; alternate mark. (2R)-3-phosphoglycerate is bound by residues Leu-122 and Arg-123. Lys-131 is subject to N6-acetyllysine; alternate. An N6-malonyllysine; alternate modification is found at Lys-131. The residue at position 146 (Lys-146) is an N6-acetyllysine. 2 residues coordinate (2R)-3-phosphoglycerate: His-170 and Arg-171. Residue Lys-191 is modified to N6-succinyllysine. Tyr-196 is modified (phosphotyrosine). At Lys-199 the chain carries N6-acetyllysine. At Ser-203 the chain carries Phosphoserine. Position 214 (Gly-214) interacts with ADP. Gly-214 is a CDP binding site. AMP is bound by residues Ala-215 and Lys-216. Ala-215 contacts ATP. Ala-215 lines the Mg(2+) pocket. N6-(2-hydroxyisobutyryl)lysine is present on Lys-216. Mg(2+)-binding residues include Ala-218 and Asp-219. Position 219 (Asp-219) interacts with CDP. Lys-220 contributes to the AMP binding site. ATP is bound at residue Lys-220. An N6-(2-hydroxyisobutyryl)lysine modification is found at Lys-220. Gly-238 is a binding site for ADP. Gly-238 contacts CDP. Gly-239 contacts AMP. Position 239 (Gly-239) interacts with ATP. 2 positions are modified to N6-acetyllysine: Lys-267 and Lys-291. An AMP-binding site is contributed by Gly-313. Gly-313 contributes to the ATP binding site. At Lys-323 the chain carries N6-(2-hydroxyisobutyryl)lysine. Residues Gly-338, Val-340, and Phe-343 each contribute to the CDP site. ADP is bound at residue Phe-343. Glu-344 contacts AMP. Glu-344 is an ATP binding site. Position 361 is an N6-acetyllysine (Lys-361). Positions 375 and 376 each coordinate ATP. Asp-375 contacts Mg(2+).

Belongs to the phosphoglycerate kinase family. In terms of assembly, monomer. Interacts with kinase MAPK1/ERK2; the interaction is direct, occurs under hypoxic conditions, and promotes its interaction with PIN1. Interacts with peptidyl-prolyl cis-trans isomerase PIN1; the interaction is direct, occurs under hypoxic conditions, and targets the protein to the mitochondrion by promoting interactions with the TOM complex. Interacts with mitochondrial circRNA mcPGK1 (via its 2nd stem-loop); the interaction is direct and targets the protein to the mitochondrion by promoting interactions with the TOM complex. Interacts with pyruvate dehydrogenase kinase PDK1; the interaction is direct, occurs under hypoxic conditions and leads to PDK1-mediated inhibition of pyruvate dehydrogenase complex activity. Mg(2+) is required as a cofactor. Post-translationally, phosphorylated at Ser-203 by MAPK1/ERK2 under hypoxic conditions, which promotes its mitochondrial targeting.

The protein resides in the cytoplasm. Its subcellular location is the cytosol. It is found in the mitochondrion matrix. The catalysed reaction is (2R)-3-phosphoglycerate + ATP = (2R)-3-phospho-glyceroyl phosphate + ADP. It carries out the reaction L-seryl-[protein] + ATP = O-phospho-L-seryl-[protein] + ADP + H(+). The protein operates within carbohydrate degradation; glycolysis; pyruvate from D-glyceraldehyde 3-phosphate: step 2/5. Its function is as follows. Catalyzes one of the two ATP producing reactions in the glycolytic pathway via the reversible conversion of 1,3-diphosphoglycerate to 3-phosphoglycerate. Both L- and D- forms of purine and pyrimidine nucleotides can be used as substrates, but the activity is much lower on pyrimidines. In addition to its role as a glycolytic enzyme, it seems that PGK-1 acts as a polymerase alpha cofactor protein (primer recognition protein). Acts as a protein kinase when localized to the mitochondrion where it phosphorylates pyruvate dehydrogenase kinase PDK1 to inhibit pyruvate dehydrogenase complex activity and suppress the formation of acetyl-coenzyme A from pyruvate, and consequently inhibit oxidative phosphorylation and promote glycolysis. May play a role in sperm motility. The protein is Phosphoglycerate kinase 1 (PGK1) of Sus scrofa (Pig).